The sequence spans 947 residues: Serine/threonine-protein kinase PKH2 (947 aa).

Basic residues predominate over residues 1-14 (MHKFRYSLHQHYSK). Disordered stretches follow at residues 1–43 (MHKF…SSSS), 108–132 (SLGNTTNETGESIAKSAPGTPLSSH), and 162–212 (FNHL…NEEN). Residues 108-117 (SLGNTTNETG) are compositionally biased toward polar residues. Over residues 187–198 (NTEEEENNDDTD) the composition is skewed to acidic residues. Basic and acidic residues predominate over residues 199–212 (EIPKSETLKQNEEN). One can recognise a Protein kinase domain in the interval 240 to 502 (FKFGKELGEG…IPEIQKHYFF (263 aa)). ATP-binding positions include 250 to 252 (SYS) and Lys269. Positions 271-316 (LDKRHIIKEKKVKYVNIEKHALNRLSNRLGVISLYFTFQDKDSLYF) are PIF-pocket. Residues 319–321 (DYA) and Glu325 each bind ATP. Asp364 serves as the catalytic Proton acceptor. Residues Glu368 and Asp382 each contribute to the ATP site. Composition is skewed to low complexity over residues 550-579 (VKKSTNSNSNTNNVATAVGGSSSNGHKGSS) and 618-632 (SSTSEDSSKRSSNSN). 4 disordered regions span residues 550–598 (VKKS…STEK), 611–644 (KPATNQNSSTSEDSSKRSSNSNETRKLSYSQQDY), 660–686 (SVGSYVKTTPSKDRKTLTKVPSNIHQQ), and 794–816 (NMKRSPTSDSKKSMDIERSASTS). The span at 802 to 811 (DSKKSMDIER) shows a compositional bias: basic and acidic residues.

It belongs to the protein kinase superfamily. AGC Ser/Thr protein kinase family. PDPK1 subfamily.

The protein resides in the nucleus. It localises to the cytoplasm. It is found in the cell cortex. The catalysed reaction is L-seryl-[protein] + ATP = O-phospho-L-seryl-[protein] + ADP + H(+). It catalyses the reaction L-threonyl-[protein] + ATP = O-phospho-L-threonyl-[protein] + ADP + H(+). Serine/threonine-protein kinase which is part sphingolipid-mediated signaling pathway that is required for the internalization step of endocytosis by regulating eisosome assembly and organization, and modulating the organization of the plasma membrane. Phosphorylates and activates PKC1. Activates YPK1 and YPK2, 2 components of signaling cascade required for maintenance of cell wall integrity. Required for stress-induced P-body assembly and regulates global mRNA decay at the deadenylation step. The sequence is that of Serine/threonine-protein kinase PKH2 from Candida albicans (strain SC5314 / ATCC MYA-2876) (Yeast).